A 310-amino-acid chain; its full sequence is Probable cobalamin biosynthesis protein CobD (310 aa).

A run of 5 helical transmembrane segments spans residues 53–73, 80–100, 157–177, 215–235, and 289–309; these read LVFGFITVFLTVFTVFLIFFT, LISNYYIKLFSYSLILSFSIG, DSIIAPLIYAAIFGLSGAFIY, IAGILLIISAPFYGGKIVPAI, and AVDYSVLLFLVIYMVLYFNLI.

This sequence belongs to the CobD/CbiB family.

Its subcellular location is the cell membrane. It participates in cofactor biosynthesis; adenosylcobalamin biosynthesis. In terms of biological role, converts cobyric acid to cobinamide by the addition of aminopropanol on the F carboxylic group. This Methanococcus vannielii (strain ATCC 35089 / DSM 1224 / JCM 13029 / OCM 148 / SB) protein is Probable cobalamin biosynthesis protein CobD.